The primary structure comprises 382 residues: D-galactonate dehydratase (382 aa).

Position 183 (aspartate 183) interacts with Mg(2+). Histidine 185 acts as the Proton donor in catalysis. Residues glutamate 209 and glutamate 235 each coordinate Mg(2+). Histidine 285 serves as the catalytic Proton acceptor.

The protein belongs to the mandelate racemase/muconate lactonizing enzyme family. GalD subfamily. It depends on Mg(2+) as a cofactor.

It carries out the reaction D-galactonate = 2-dehydro-3-deoxy-D-galactonate + H2O. It participates in carbohydrate acid metabolism; D-galactonate degradation; D-glyceraldehyde 3-phosphate and pyruvate from D-galactonate: step 1/3. Functionally, catalyzes the dehydration of D-galactonate to 2-keto-3-deoxy-D-galactonate. This Salmonella paratyphi A (strain AKU_12601) protein is D-galactonate dehydratase.